Here is a 169-residue protein sequence, read N- to C-terminus: Large ribosomal subunit protein bL9 (169 aa).

Belongs to the bacterial ribosomal protein bL9 family.

In terms of biological role, binds to the 23S rRNA. The polypeptide is Large ribosomal subunit protein bL9 (Chlamydia pneumoniae (Chlamydophila pneumoniae)).